The sequence spans 209 residues: Small ribosomal subunit protein uS4 (209 aa).

The disordered stretch occupies residues 23–46 (SRNPLLKKPHPPGQHGMQRKKKSD). Residues 93 to 156 (CRLDNMVYRM…RKLQSVQESL (64 aa)) enclose the S4 RNA-binding domain.

The protein belongs to the universal ribosomal protein uS4 family. In terms of assembly, part of the 30S ribosomal subunit. Contacts protein S5. The interaction surface between S4 and S5 is involved in control of translational fidelity.

Functionally, one of the primary rRNA binding proteins, it binds directly to 16S rRNA where it nucleates assembly of the body of the 30S subunit. Its function is as follows. With S5 and S12 plays an important role in translational accuracy. This Chlamydia caviae (strain ATCC VR-813 / DSM 19441 / 03DC25 / GPIC) (Chlamydophila caviae) protein is Small ribosomal subunit protein uS4.